A 300-amino-acid polypeptide reads, in one-letter code: Endonuclease III-like protein 1 (300 aa).

The N-terminal 19 residues, 1–19 (MNSGVRMVTRSRSRATRIA), are a transit peptide targeting the mitochondrion. Positions 1–53 (MNSGVRMVTRSRSRATRIASEGCREELAPREAAAEGRKSHRPVRHPRRTQKTH) are disordered. The segment covering 22–37 (GCREELAPREAAAEGR) has biased composition (basic and acidic residues). A compositionally biased stretch (basic residues) spans 38 to 51 (KSHRPVRHPRRTQK). Residues 187–211 (RYEGDIPASVAELVALPGVGPKMAH) enclose the HhH domain. Residue Lys-208 is the Nucleophile; for N-glycosylase activity of the active site. Residues Cys-278, Cys-285, Cys-288, and Cys-294 each coordinate [4Fe-4S] cluster.

Belongs to the Nth/MutY family. As to quaternary structure, interacts with YBX1. Interacts with ERCC5/XPG; the interaction stimulates NTHL1 activity and NTHL1 binding to its DNA substrate. [4Fe-4S] cluster serves as cofactor. Ubiquitinated by TRIM26; leading to proteasomal degradation. In terms of tissue distribution, widely expressed.

It is found in the nucleus. The protein localises to the mitochondrion. The enzyme catalyses 2'-deoxyribonucleotide-(2'-deoxyribose 5'-phosphate)-2'-deoxyribonucleotide-DNA = a 3'-end 2'-deoxyribonucleotide-(2,3-dehydro-2,3-deoxyribose 5'-phosphate)-DNA + a 5'-end 5'-phospho-2'-deoxyribonucleoside-DNA + H(+). In terms of biological role, bifunctional DNA N-glycosylase with associated apurinic/apyrimidinic (AP) lyase function that catalyzes the first step in base excision repair (BER), the primary repair pathway for the repair of oxidative DNA damage. The DNA N-glycosylase activity releases the damaged DNA base from DNA by cleaving the N-glycosidic bond, leaving an AP site. The AP lyase activity cleaves the phosphodiester bond 3' to the AP site by a beta-elimination. Primarily recognizes and repairs oxidative base damage of pyrimidines. The protein is Endonuclease III-like protein 1 (Nthl1) of Mus musculus (Mouse).